An 89-amino-acid chain; its full sequence is Small ribosomal subunit protein uS15 (89 aa).

Belongs to the universal ribosomal protein uS15 family. Part of the 30S ribosomal subunit. Forms a bridge to the 50S subunit in the 70S ribosome, contacting the 23S rRNA.

Its function is as follows. One of the primary rRNA binding proteins, it binds directly to 16S rRNA where it helps nucleate assembly of the platform of the 30S subunit by binding and bridging several RNA helices of the 16S rRNA. Functionally, forms an intersubunit bridge (bridge B4) with the 23S rRNA of the 50S subunit in the ribosome. The sequence is that of Small ribosomal subunit protein uS15 from Laribacter hongkongensis (strain HLHK9).